The sequence spans 137 residues: Large ribosomal subunit protein bL17 (137 aa).

This sequence belongs to the bacterial ribosomal protein bL17 family. In terms of assembly, part of the 50S ribosomal subunit. Contacts protein L32.

This chain is Large ribosomal subunit protein bL17, found in Caulobacter sp. (strain K31).